We begin with the raw amino-acid sequence, 276 residues long: Beta-lactamase OXA-1 (276 aa).

Residues 1-25 (MKNTIHINFAIFLIIANIIYSSASA) form the signal peptide. The active-site Acyl-ester intermediate is serine 71. Serine 71, lysine 74, serine 118, threonine 216, and alanine 218 together coordinate a beta-lactam. An N6-carboxylysine modification is found at lysine 74.

The protein belongs to the class-D beta-lactamase family. As to quaternary structure, monomer.

It is found in the periplasm. The enzyme catalyses a beta-lactam + H2O = a substituted beta-amino acid. With respect to regulation, inhibited by penicillin sulfones. Only weakly inhibited by clavulanic acid and sulbactam. Its function is as follows. Class D beta-lactamase which confers resistance to the beta-lactam antibiotics, including amoxicillin and ticarcillin. Acts via hydrolysis of the beta-lactam ring. Has penicillin- and cephalosporin-hydrolyzing activities. In Escherichia coli, this protein is Beta-lactamase OXA-1.